A 253-amino-acid chain; its full sequence is Imidazole glycerol phosphate synthase subunit HisF (253 aa).

Catalysis depends on residues D11 and D130.

The protein belongs to the HisA/HisF family. Heterodimer of HisH and HisF.

It localises to the cytoplasm. The enzyme catalyses 5-[(5-phospho-1-deoxy-D-ribulos-1-ylimino)methylamino]-1-(5-phospho-beta-D-ribosyl)imidazole-4-carboxamide + L-glutamine = D-erythro-1-(imidazol-4-yl)glycerol 3-phosphate + 5-amino-1-(5-phospho-beta-D-ribosyl)imidazole-4-carboxamide + L-glutamate + H(+). Its pathway is amino-acid biosynthesis; L-histidine biosynthesis; L-histidine from 5-phospho-alpha-D-ribose 1-diphosphate: step 5/9. Functionally, IGPS catalyzes the conversion of PRFAR and glutamine to IGP, AICAR and glutamate. The HisF subunit catalyzes the cyclization activity that produces IGP and AICAR from PRFAR using the ammonia provided by the HisH subunit. This is Imidazole glycerol phosphate synthase subunit HisF from Geobacter metallireducens (strain ATCC 53774 / DSM 7210 / GS-15).